The primary structure comprises 361 residues: 3-dehydroquinate synthase (361 aa).

Belongs to the archaeal-type DHQ synthase family.

It catalyses the reaction 2-amino-2,3,7-trideoxy-D-lyxo-hept-6-ulosonate + NAD(+) + H2O = 3-dehydroquinate + NH4(+) + NADH + H(+). In terms of biological role, catalyzes the oxidative deamination and cyclization of 2-amino-3,7-dideoxy-D-threo-hept-6-ulosonic acid (ADH) to yield 3-dehydroquinate (DHQ), which is fed into the canonical shikimic pathway of aromatic amino acid biosynthesis. This is 3-dehydroquinate synthase from Methanococcus maripaludis (strain C6 / ATCC BAA-1332).